Here is a 307-residue protein sequence, read N- to C-terminus: tRNA dimethylallyltransferase (307 aa).

Residue 10 to 17 (GPTASGKS) coordinates ATP. Substrate is bound at residue 12-17 (TASGKS). 2 interaction with substrate tRNA regions span residues 35-38 (DSMQ) and 159-163 (QRLCR).

The protein belongs to the IPP transferase family. Monomer. Mg(2+) serves as cofactor.

It carries out the reaction adenosine(37) in tRNA + dimethylallyl diphosphate = N(6)-dimethylallyladenosine(37) in tRNA + diphosphate. In terms of biological role, catalyzes the transfer of a dimethylallyl group onto the adenine at position 37 in tRNAs that read codons beginning with uridine, leading to the formation of N6-(dimethylallyl)adenosine (i(6)A). The sequence is that of tRNA dimethylallyltransferase from Phenylobacterium zucineum (strain HLK1).